A 551-amino-acid polypeptide reads, in one-letter code: MTYSTVNINTPPPYLALASNEKLPTVLSIAGTDPSGGAGVEADVKTITAHRCYAMTCITALNAQTPVKVYSINNTPKEVVSQILDANLQDMKCDVIKTGMLTTAAIEVLHEKLLQLGENRPKLVVDPVLVATSGSSLAGKDIASLITEKIAPFADILTPNIPECFKLLGEDREISKLRDIFEVAKDLAKITKCSNILVKGGHIPWNDEEGKYITDVLYLGAEQRFITFKGNFVNTTHTHGTGCTLASAIASNLARGYSLPQSVYGGIEYVQNAVAIGCDVTKETVKDNGPINHVYAIEIPLEKMLSDECFTASDAVHKKPVKSSLNKIPGGSFYKYLINHPKVKPHWDSYVNHDFVRKVADGSLEPKKFQFFIEQDYLYLVNYARISCIAGSKSPCLEDLEKELVIVECVRNGLCQHERRLREEFGIKDPDYLQKIQRGPALRAYCRYFNDVSRRGNWQELVIALNPCLMGYVHALTKIKDEVTAAEGSVYREWCETYSSSWCHEAMLEGEKLLNHILETYPPEKLDTLVTIYAEVCELEANFWTAALEYE.

Glutamine 64 contributes to the 4-amino-5-hydroxymethyl-2-methylpyrimidine binding site.

In the N-terminal section; belongs to the ThiD family. The protein in the C-terminal section; belongs to the thiaminase-2 family.

The enzyme catalyses 4-amino-5-hydroxymethyl-2-methylpyrimidine + ATP = 4-amino-2-methyl-5-(phosphooxymethyl)pyrimidine + ADP + H(+). It carries out the reaction 4-amino-2-methyl-5-(phosphooxymethyl)pyrimidine + ATP = 4-amino-2-methyl-5-(diphosphooxymethyl)pyrimidine + ADP. Its pathway is cofactor biosynthesis; thiamine diphosphate biosynthesis; 4-amino-2-methyl-5-diphosphomethylpyrimidine from 5-amino-1-(5-phospho-D-ribosyl)imidazole: step 2/3. It functions in the pathway cofactor biosynthesis; thiamine diphosphate biosynthesis; 4-amino-2-methyl-5-diphosphomethylpyrimidine from 5-amino-1-(5-phospho-D-ribosyl)imidazole: step 3/3. Catalyzes the phosphorylation of hydroxymethylpyrimidine phosphate (HMP-P) to HMP-PP, and also probably that of HMP to HMP-P. The polypeptide is Hydroxymethylpyrimidine/phosphomethylpyrimidine kinase THI21 (THI21) (Saccharomyces cerevisiae (strain ATCC 204508 / S288c) (Baker's yeast)).